Reading from the N-terminus, the 651-residue chain is Probable potassium transport system protein Kup 3 (651 aa).

12 helical membrane passes run 38–58, 77–97, 129–149, 166–186, 197–217, 242–262, 276–296, 314–334, 366–386, 396–416, 421–441, and 448–468; these read FWAL…TSPL, VLVL…VTAK, LFLL…SMIT, PALE…LFGV, FFGP…AMHI, IGLV…ALYA, WLGF…ALVL, LVLP…QAVI, IYLP…VLLF, YGIA…VVIW, WSWP…AMFF, and LLDG…VIWT.

The protein belongs to the HAK/KUP transporter (TC 2.A.72) family.

Its subcellular location is the cell inner membrane. The enzyme catalyses K(+)(in) + H(+)(in) = K(+)(out) + H(+)(out). Functionally, transport of potassium into the cell. Likely operates as a K(+):H(+) symporter. The polypeptide is Probable potassium transport system protein Kup 3 (Rhodopseudomonas palustris (strain ATCC BAA-98 / CGA009)).